The chain runs to 184 residues: GTP cyclohydrolase 1 (184 aa).

Residues cysteine 75, histidine 78, and cysteine 146 each coordinate Zn(2+).

Belongs to the GTP cyclohydrolase I family. As to quaternary structure, homomer.

The enzyme catalyses GTP + H2O = 7,8-dihydroneopterin 3'-triphosphate + formate + H(+). It participates in cofactor biosynthesis; 7,8-dihydroneopterin triphosphate biosynthesis; 7,8-dihydroneopterin triphosphate from GTP: step 1/1. This Coxiella burnetii (strain Dugway 5J108-111) protein is GTP cyclohydrolase 1.